A 573-amino-acid polypeptide reads, in one-letter code: Mitochondrial distribution and morphology protein 34 (573 aa).

One can recognise an SMP-LTD domain in the interval 1–195 (MAFNFNWSPL…LPAIIHRLSL (195 aa)). Disordered regions lie at residues 301–326 (EGLG…SSPL), 349–433 (FSGY…RFPN), 499–521 (SREK…ITDA), and 550–573 (LVNN…AYGQ). The span at 306-316 (GLMSPGSPALS) shows a compositional bias: low complexity. The span at 360 to 373 (RHTKARPTKKRKKR) shows a compositional bias: basic residues. Residues 374–385 (VVDLRKQSKPTD) show a composition bias toward basic and acidic residues. Low complexity predominate over residues 396-409 (TETSTASTTFSSST).

This sequence belongs to the MDM34 family. In terms of assembly, component of the ER-mitochondria encounter structure (ERMES) or MDM complex, composed of MMM1, MDM10, MDM12 and MDM34.

Its subcellular location is the mitochondrion outer membrane. In terms of biological role, component of the ERMES/MDM complex, which serves as a molecular tether to connect the endoplasmic reticulum (ER) and mitochondria. Components of this complex are involved in the control of mitochondrial shape and protein biogenesis, and function in nonvesicular lipid trafficking between the ER and mitochondria. MDM34 is required for the interaction of the ER-resident membrane protein MMM1 and the outer mitochondrial membrane-resident beta-barrel protein MDM10. The polypeptide is Mitochondrial distribution and morphology protein 34 (Uncinocarpus reesii (strain UAMH 1704)).